We begin with the raw amino-acid sequence, 403 residues long: Basic leucine zipper 25 (403 aa).

Disordered regions lie at residues 13-128 and 156-259; these read SFWP…APVV and VKPE…EFDT. Residues 24 to 33 are compositionally biased toward low complexity; sequence PGSSSTPSPT. A compositionally biased stretch (polar residues) spans 56-69; it reads LSGSDSSPTTNTIE. 2 stretches are compositionally biased toward low complexity: residues 115–128 and 161–174; these read APSS…APVV and SSAS…AQGS. The segment covering 175 to 195 has biased composition (polar residues); sequence IVAQTSPGASSVRFSPTTSTQ. Positions 212 to 226 are enriched in acidic residues; it reads DSDDDDLDGDADNGD. Residue serine 213 is modified to Phosphoserine. The bZIP domain maps to 229-292; the sequence is DVKRARRMLS…DAAAVDNRIL (64 aa). Residues 231–250 are basic motif; the sequence is KRARRMLSNRESARRSRRRK. The Nuclear localization signal motif lies at 233-240; sequence ARRMLSNR. Residues 264-271 are leucine-zipper; that stretch reads LRAEHSTL. Residues 332–345 show a composition bias toward low complexity; it reads NTPSASSSIPPNSN. Disordered stretches follow at residues 332–361 and 380–403; these read NTPS…SAGL and EGMQ…NHKH. Residues 351 to 361 show a composition bias toward polar residues; the sequence is ANSSTNTSAGL.

Belongs to the bZIP family. As to quaternary structure, homodimer. Forms a heterodimer with BZIP1, BZIP1, BZIP2, BZIP9, BZIP11, BZIP44, BZIP53 and BZIP63. Interacts with ABI3 and forms a complex made of ABI3, BZIP53 and BZIP25. Expressed in roots, shoots, stems, leaves, stipulae, siliques, seeds, pollen, and flowers.

Its subcellular location is the nucleus. Functionally, transcription factor that binds to the 5'-ACGT-3' box, especially present in G-box-like motif (5'-CCACGTGGCC-3'), ABRE elements, of seed storage protein (SSP) encoding gene promoters (e.g. At2S and CRU3) and promotes their expression in seeds when in complex with ABI3 and BZIP53. This chain is Basic leucine zipper 25 (BZIP25), found in Arabidopsis thaliana (Mouse-ear cress).